Here is a 459-residue protein sequence, read N- to C-terminus: Putrescine aminotransferase (459 aa).

Pyridoxal 5'-phosphate is bound by residues 150 to 151 (GT) and Q274. K300 is subject to N6-(pyridoxal phosphate)lysine. Residue T332 coordinates pyridoxal 5'-phosphate.

This sequence belongs to the class-III pyridoxal-phosphate-dependent aminotransferase family. Putrescine aminotransferase subfamily. The cofactor is pyridoxal 5'-phosphate.

It catalyses the reaction an alkane-alpha,omega-diamine + 2-oxoglutarate = an omega-aminoaldehyde + L-glutamate. The enzyme catalyses putrescine + 2-oxoglutarate = 1-pyrroline + L-glutamate + H2O. It carries out the reaction cadaverine + 2-oxoglutarate = 5-aminopentanal + L-glutamate. The protein operates within amine and polyamine degradation; putrescine degradation; 4-aminobutanal from putrescine (transaminase route): step 1/1. In terms of biological role, catalyzes the aminotransferase reaction from putrescine to 2-oxoglutarate, leading to glutamate and 4-aminobutanal, which spontaneously cyclizes to form 1-pyrroline. This is the first step in one of two pathways for putrescine degradation, where putrescine is converted into 4-aminobutanoate (gamma-aminobutyrate or GABA) via 4-aminobutanal. Also functions as a cadaverine transaminase in a a L-lysine degradation pathway to succinate that proceeds via cadaverine, glutarate and L-2-hydroxyglutarate. This chain is Putrescine aminotransferase, found in Escherichia coli (strain K12 / MC4100 / BW2952).